The chain runs to 274 residues: N-acetylmuramic acid 6-phosphate etherase (274 aa).

The SIS domain occupies 52–215; it reads IVPRMEQGGR…STSIMIRLGR (164 aa). Catalysis depends on Glu-80, which acts as the Proton donor. Residue Glu-111 is part of the active site.

It belongs to the GCKR-like family. MurNAc-6-P etherase subfamily. As to quaternary structure, homodimer.

It catalyses the reaction N-acetyl-D-muramate 6-phosphate + H2O = N-acetyl-D-glucosamine 6-phosphate + (R)-lactate. It participates in amino-sugar metabolism; N-acetylmuramate degradation. Its function is as follows. Specifically catalyzes the cleavage of the D-lactyl ether substituent of MurNAc 6-phosphate, producing GlcNAc 6-phosphate and D-lactate. In Porphyromonas gingivalis (strain ATCC 33277 / DSM 20709 / CIP 103683 / JCM 12257 / NCTC 11834 / 2561), this protein is N-acetylmuramic acid 6-phosphate etherase.